The primary structure comprises 41 residues: uncharacterized protein (41 aa).

This is an uncharacterized protein from Saccharomyces cerevisiae (strain ATCC 204508 / S288c) (Baker's yeast).